The chain runs to 120 residues: Large ribosomal subunit protein uL24 (120 aa).

Positions M1–R33 are disordered. Residues N10–K22 are compositionally biased toward basic and acidic residues.

Belongs to the universal ribosomal protein uL24 family. As to quaternary structure, part of the 50S ribosomal subunit.

Its function is as follows. One of two assembly initiator proteins, it binds directly to the 5'-end of the 23S rRNA, where it nucleates assembly of the 50S subunit. In terms of biological role, located at the polypeptide exit tunnel on the outside of the subunit. In Natronomonas pharaonis (strain ATCC 35678 / DSM 2160 / CIP 103997 / JCM 8858 / NBRC 14720 / NCIMB 2260 / Gabara) (Halobacterium pharaonis), this protein is Large ribosomal subunit protein uL24.